The following is an 859-amino-acid chain: DNA mismatch repair protein MutS (859 aa).

Residue glycine 618–serine 625 participates in ATP binding.

Belongs to the DNA mismatch repair MutS family.

This protein is involved in the repair of mismatches in DNA. It is possible that it carries out the mismatch recognition step. This protein has a weak ATPase activity. The polypeptide is DNA mismatch repair protein MutS (Shewanella sediminis (strain HAW-EB3)).